We begin with the raw amino-acid sequence, 257 residues long: MMHILVTLLLVAIHSIPTTWAVTCTGCVDLDELSFEKTVERFPYSVVKFDIAYPYGEKHEAFTAFSKSAHKATKDLLIATVGVKDYGELENKALGDRYKVDDKNFPSIFLFKGNADEYVQLPSHVDVTLDNLKAFVSANTPLYIGRDGCIKEFNEVLKNYANIPDAEQLKLIEKLQAKQEQLTDPEQQQNARAYLIYMRKIHEVGYDFLEEETKRLLRLKAGKVTEAKKEELLRKLNILEVFRVHKVTKTAPEKEEL.

The signal sequence occupies residues 1–21; that stretch reads MMHILVTLLLVAIHSIPTTWA. A CXXC motif region spans residues 24–27; it reads CTGC. Positions 254–257 match the Prevents secretion from ER motif; it reads KEEL.

As to quaternary structure, homodimer. Interacts with pip; the interaction is direct and does not require pip to be folded. As to expression, briefly expressed in the follicle cells of the ovary, at around the time when the dorsoventral axis of the egg chamber is first established.

The protein localises to the endoplasmic reticulum lumen. Its function is as follows. Probable chaperone protein involved in dorsoventral axis patterning in early embryos. Probably acts by folding and targeting pipe (pip) into the Golgi. This is Protein windbeutel from Drosophila melanogaster (Fruit fly).